Consider the following 432-residue polypeptide: ATP-dependent RNA helicase RhlB (432 aa).

The Q motif motif lies at 9–37; sequence KKFSDFALHPKVIEALEKKGFSNCTQIQA. Residues 40 to 219 enclose the Helicase ATP-binding domain; that stretch reads LPITVKGHDI…FEQMNNPEYV (180 aa). An ATP-binding site is contributed by 53–60; the sequence is AQTGTGKT. Residues 165 to 168 carry the DEAD box motif; that stretch reads DEAD. The 146-residue stretch at 245–390 folds into the Helicase C-terminal domain; the sequence is RLLQTLIEEE…VSKYNSDALL (146 aa). Positions 393-432 are disordered; it reads LPEPKRRHRPRQGQPRRNNSAPRRGNNTQRNNRNKRPSHS. A compositionally biased stretch (low complexity) spans 404 to 423; the sequence is QGQPRRNNSAPRRGNNTQRN.

The protein belongs to the DEAD box helicase family. RhlB subfamily. As to quaternary structure, component of the RNA degradosome, which is a multiprotein complex involved in RNA processing and mRNA degradation.

It localises to the cytoplasm. It carries out the reaction ATP + H2O = ADP + phosphate + H(+). Its function is as follows. DEAD-box RNA helicase involved in RNA degradation. Has RNA-dependent ATPase activity and unwinds double-stranded RNA. The polypeptide is ATP-dependent RNA helicase RhlB (Proteus mirabilis (strain HI4320)).